Consider the following 436-residue polypeptide: Phosphomethylpyrimidine synthase (436 aa).

Substrate is bound by residues Asn69, Met98, Tyr127, His163, 185–187, 226–229, and Glu265; these read SRG and DACR. His269 is a Zn(2+) binding site. Position 292 (Tyr292) interacts with substrate. Position 333 (His333) interacts with Zn(2+). 3 residues coordinate [4Fe-4S] cluster: Cys409, Cys412, and Cys416.

This sequence belongs to the ThiC family. The cofactor is [4Fe-4S] cluster.

The enzyme catalyses 5-amino-1-(5-phospho-beta-D-ribosyl)imidazole + S-adenosyl-L-methionine = 4-amino-2-methyl-5-(phosphooxymethyl)pyrimidine + CO + 5'-deoxyadenosine + formate + L-methionine + 3 H(+). The protein operates within cofactor biosynthesis; thiamine diphosphate biosynthesis. Its function is as follows. Catalyzes the synthesis of the hydroxymethylpyrimidine phosphate (HMP-P) moiety of thiamine from aminoimidazole ribotide (AIR) in a radical S-adenosyl-L-methionine (SAM)-dependent reaction. This is Phosphomethylpyrimidine synthase from Clostridium acetobutylicum (strain ATCC 824 / DSM 792 / JCM 1419 / IAM 19013 / LMG 5710 / NBRC 13948 / NRRL B-527 / VKM B-1787 / 2291 / W).